Consider the following 114-residue polypeptide: Iron-sulfur cluster insertion protein ErpA (114 aa).

Iron-sulfur cluster is bound by residues C42, C106, and C108.

This sequence belongs to the HesB/IscA family. In terms of assembly, homodimer. Requires iron-sulfur cluster as cofactor.

Functionally, required for insertion of 4Fe-4S clusters for at least IspG. The protein is Iron-sulfur cluster insertion protein ErpA of Klebsiella pneumoniae subsp. pneumoniae (strain ATCC 700721 / MGH 78578).